Consider the following 473-residue polypeptide: Ribulose bisphosphate carboxylase large chain (473 aa).

Substrate-binding residues include Asn116 and Thr166. Lys168 serves as the catalytic Proton acceptor. Residue Lys170 coordinates substrate. The Mg(2+) site is built by Lys194, Asp196, and Glu197. An N6-carboxylysine modification is found at Lys194. Catalysis depends on His287, which acts as the Proton acceptor. Substrate-binding residues include Arg288, His320, and Ser372.

Belongs to the RuBisCO large chain family. Type I subfamily. Heterohexadecamer of 8 large chains and 8 small chains. Mg(2+) is required as a cofactor.

It carries out the reaction 2 (2R)-3-phosphoglycerate + 2 H(+) = D-ribulose 1,5-bisphosphate + CO2 + H2O. It catalyses the reaction D-ribulose 1,5-bisphosphate + O2 = 2-phosphoglycolate + (2R)-3-phosphoglycerate + 2 H(+). In terms of biological role, ruBisCO catalyzes two reactions: the carboxylation of D-ribulose 1,5-bisphosphate, the primary event in carbon dioxide fixation, as well as the oxidative fragmentation of the pentose substrate. Both reactions occur simultaneously and in competition at the same active site. The sequence is that of Ribulose bisphosphate carboxylase large chain from Thiomonas intermedia (strain K12) (Thiobacillus intermedius).